Consider the following 729-residue polypeptide: Monosaccharide-sensing protein 3 (729 aa).

A run of 6 helical transmembrane segments spans residues 5–25 (VLVALAAAIGNMLQGWDNATI), 46–66 (GLIVAMSLIGATLITTFSGPV), 81–101 (VLYFLSSIVMFWSPNVYVLLF), 104–124 (LLDGFGIGLAVTLVPIYISET), 135–155 (TFPQFCGSGGMFLSYCLVFGM), and 165–185 (LMLGVLSIPSIAYFVLAAFFL). Residues 337–372 (QESQWDPERNNEDSSDQDENLNSPLLSPQTTEPDDY) are disordered. Residues 356–367 (NLNSPLLSPQTT) show a composition bias toward polar residues. A Phosphoserine modification is found at serine 446. Helical transmembrane passes span 511-531 (ALMVGVGLQILQQFAGINGVM), 557-577 (ASLLISALTTLLMLPCILVSM), 581-601 (MLSTIPILILSLVTLVIGSLV), 610-630 (LISTASVTVYLSCFVMGFGAI), 650-670 (ICALTFWICDIIVTYTLPVML), and 673-693 (IGIAGVFGIYAIVCAVAWVFV).

It belongs to the major facilitator superfamily. Sugar transporter (TC 2.A.1.1) family. Weakly expressed.

Its subcellular location is the vacuole membrane. The enzyme catalyses D-glucose(out) + H(+)(in) = D-glucose(in) + H(+)(out). The catalysed reaction is sucrose(out) + H(+)(in) = sucrose(in) + H(+)(out). In terms of biological role, sugar proton-coupled antiporter which contributes to vacuolar sugar import (e.g. monosaccharides including glucose,sucrose and fructose), particularly during stress responses (e.g. in response to cold). The sequence is that of Monosaccharide-sensing protein 3 from Arabidopsis thaliana (Mouse-ear cress).